The sequence spans 192 residues: Fe/S biogenesis protein NfuA (192 aa).

Positions 149 and 152 each coordinate [4Fe-4S] cluster.

Belongs to the NfuA family. In terms of assembly, homodimer. [4Fe-4S] cluster is required as a cofactor.

In terms of biological role, involved in iron-sulfur cluster biogenesis. Binds a 4Fe-4S cluster, can transfer this cluster to apoproteins, and thereby intervenes in the maturation of Fe/S proteins. Could also act as a scaffold/chaperone for damaged Fe/S proteins. This is Fe/S biogenesis protein NfuA from Shewanella frigidimarina (strain NCIMB 400).